Consider the following 291-residue polypeptide: MFHIPVMPLETSRYLIGKPGGLYVDCTFGGGGHALYLLDKFKDIKIVAFDWDEDSSKRFIEREKEFSGRVTFIRDNFKNVKKALSALNISKVDGILADIGVSSKQFGDLDRGFSFNSGTLDMRMDKRNGFEAKEVVNSYSYEDLADIFYKYGEERKSRQIASAILLRRKRGIINTASELQTVICSVKRPEGRINPATKVFQALRIFVNSELENLAVLLSDAPELLNAGGRTVIISFHSLEDRIVKQNFKRNSECGIYKILTKKVVTALKEEVKINPGSRSARIRAAEKTSV.

Residues 31–33 (GGH), Asp50, Phe77, Asp98, and Gln105 each bind S-adenosyl-L-methionine.

This sequence belongs to the methyltransferase superfamily. RsmH family.

The protein localises to the cytoplasm. It catalyses the reaction cytidine(1402) in 16S rRNA + S-adenosyl-L-methionine = N(4)-methylcytidine(1402) in 16S rRNA + S-adenosyl-L-homocysteine + H(+). Its function is as follows. Specifically methylates the N4 position of cytidine in position 1402 (C1402) of 16S rRNA. The protein is Ribosomal RNA small subunit methyltransferase H of Endomicrobium trichonymphae.